A 706-amino-acid polypeptide reads, in one-letter code: UvrABC system protein C (706 aa).

Positions 16–95 constitute a GIY-YIG domain; the sequence is VEPGVYRFRD…IKEFDPRFNV (80 aa). Positions 208–243 constitute a UVR domain; sequence DRLAKDMEQQMTAAAEQLDFERAARLRDDISALKRA. The interval 651-706 is disordered; it reads APQNGTAPDPAPGTGDPQTPADPHSAATAADIEDDRHATGATGPQMNGSEQQVDRV. A compositionally biased stretch (polar residues) spans 692–706; the sequence is TGPQMNGSEQQVDRV.

This sequence belongs to the UvrC family. Interacts with UvrB in an incision complex.

It localises to the cytoplasm. Functionally, the UvrABC repair system catalyzes the recognition and processing of DNA lesions. UvrC both incises the 5' and 3' sides of the lesion. The N-terminal half is responsible for the 3' incision and the C-terminal half is responsible for the 5' incision. This is UvrABC system protein C from Mycolicibacterium smegmatis (strain ATCC 700084 / mc(2)155) (Mycobacterium smegmatis).